The primary structure comprises 294 residues: ATP synthase gamma chain (294 aa).

It belongs to the ATPase gamma chain family. As to quaternary structure, F-type ATPases have 2 components, CF(1) - the catalytic core - and CF(0) - the membrane proton channel. CF(1) has five subunits: alpha(3), beta(3), gamma(1), delta(1), epsilon(1). CF(0) has three main subunits: a, b and c.

Its subcellular location is the cell membrane. Produces ATP from ADP in the presence of a proton gradient across the membrane. The gamma chain is believed to be important in regulating ATPase activity and the flow of protons through the CF(0) complex. The chain is ATP synthase gamma chain from Opitutus terrae (strain DSM 11246 / JCM 15787 / PB90-1).